The primary structure comprises 262 residues: Cytochrome c oxidase subunit 3 (262 aa).

Transmembrane regions (helical) follow at residues 39 to 59 (YDIS…YQWW), 83 to 103 (GMIL…WAFF), 120 to 140 (MGII…ILLA), 163 to 183 (GLFF…YEYI), 201 to 221 (ATGF…VCLL), and 240 to 260 (AWYW…IYWW).

It belongs to the cytochrome c oxidase subunit 3 family. Component of the cytochrome c oxidase (complex IV, CIV), a multisubunit enzyme composed of a catalytic core of 3 subunits and several supernumerary subunits. The complex exists as a monomer or a dimer and forms supercomplexes (SCs) in the inner mitochondrial membrane with ubiquinol-cytochrome c oxidoreductase (cytochrome b-c1 complex, complex III, CIII).

Its subcellular location is the mitochondrion inner membrane. The enzyme catalyses 4 Fe(II)-[cytochrome c] + O2 + 8 H(+)(in) = 4 Fe(III)-[cytochrome c] + 2 H2O + 4 H(+)(out). In terms of biological role, component of the cytochrome c oxidase, the last enzyme in the mitochondrial electron transport chain which drives oxidative phosphorylation. The respiratory chain contains 3 multisubunit complexes succinate dehydrogenase (complex II, CII), ubiquinol-cytochrome c oxidoreductase (cytochrome b-c1 complex, complex III, CIII) and cytochrome c oxidase (complex IV, CIV), that cooperate to transfer electrons derived from NADH and succinate to molecular oxygen, creating an electrochemical gradient over the inner membrane that drives transmembrane transport and the ATP synthase. Cytochrome c oxidase is the component of the respiratory chain that catalyzes the reduction of oxygen to water. Electrons originating from reduced cytochrome c in the intermembrane space (IMS) are transferred via the dinuclear copper A center (CU(A)) of subunit 2 and heme A of subunit 1 to the active site in subunit 1, a binuclear center (BNC) formed by heme A3 and copper B (CU(B)). The BNC reduces molecular oxygen to 2 water molecules using 4 electrons from cytochrome c in the IMS and 4 protons from the mitochondrial matrix. This is Cytochrome c oxidase subunit 3 (mt:CoIII) from Drosophila yakuba (Fruit fly).